A 130-amino-acid polypeptide reads, in one-letter code: MLEKLIKNFATYMGITSTLELDADGAYVLPISEVVKVRAQQNADNEIVLSASLGALPPSADTAKLYLQMMIGNLFGRETGGSALGLDSEGNVVMVRRFSGDTTYDDFVRHVESFMNFSETWLSDLGLGKQ.

The protein belongs to the chlamydial CPn_0713/CT_663/TC_0034 family.

This is Protein CPn_0713/CP_0033/CPj0713/CpB0740 from Chlamydia pneumoniae (Chlamydophila pneumoniae).